Here is a 259-residue protein sequence, read N- to C-terminus: tRNA pseudouridine synthase A (259 aa).

D52 serves as the catalytic Nucleophile. Y111 provides a ligand contact to substrate.

The protein belongs to the tRNA pseudouridine synthase TruA family. Homodimer.

It catalyses the reaction uridine(38/39/40) in tRNA = pseudouridine(38/39/40) in tRNA. Its function is as follows. Formation of pseudouridine at positions 38, 39 and 40 in the anticodon stem and loop of transfer RNAs. The chain is tRNA pseudouridine synthase A from Ruegeria sp. (strain TM1040) (Silicibacter sp.).